A 204-amino-acid chain; its full sequence is Holliday junction branch migration complex subunit RuvA (204 aa).

Residues 1 to 64 form a domain I region; sequence MIGKLKGTID…EDQLKLFGFM (64 aa). A domain II region spans residues 65 to 143; it reads TALEREWFNL…AFAGEAINIA (79 aa). Positions 144–151 are flexible linker; it reads LKQELGEG. Positions 152-204 are domain III; it reads VAAAPVADAVSALTNLGYSRDQAANAVAAAMKTAGDGADSAKLIRLGLKELAR.

This sequence belongs to the RuvA family. As to quaternary structure, homotetramer. Forms an RuvA(8)-RuvB(12)-Holliday junction (HJ) complex. HJ DNA is sandwiched between 2 RuvA tetramers; dsDNA enters through RuvA and exits via RuvB. An RuvB hexamer assembles on each DNA strand where it exits the tetramer. Each RuvB hexamer is contacted by two RuvA subunits (via domain III) on 2 adjacent RuvB subunits; this complex drives branch migration. In the full resolvosome a probable DNA-RuvA(4)-RuvB(12)-RuvC(2) complex forms which resolves the HJ.

The protein resides in the cytoplasm. Functionally, the RuvA-RuvB-RuvC complex processes Holliday junction (HJ) DNA during genetic recombination and DNA repair, while the RuvA-RuvB complex plays an important role in the rescue of blocked DNA replication forks via replication fork reversal (RFR). RuvA specifically binds to HJ cruciform DNA, conferring on it an open structure. The RuvB hexamer acts as an ATP-dependent pump, pulling dsDNA into and through the RuvAB complex. HJ branch migration allows RuvC to scan DNA until it finds its consensus sequence, where it cleaves and resolves the cruciform DNA. The chain is Holliday junction branch migration complex subunit RuvA from Rhizobium etli (strain CIAT 652).